A 421-amino-acid polypeptide reads, in one-letter code: GTPase Obg (421 aa).

Residues Met1–Leu158 enclose the Obg domain. The interval Ala21 to Asp40 is disordered. The OBG-type G domain maps to Ala159–Asp328. Residues Gly165–Ser172, Phe190–Glu194, Asp211–Gly214, Asn281–Asp284, and Ser309–Ala311 contribute to the GTP site. The Mg(2+) site is built by Ser172 and Thr192. Residues Phe344 to Glu421 form the OCT domain.

The protein belongs to the TRAFAC class OBG-HflX-like GTPase superfamily. OBG GTPase family. As to quaternary structure, monomer. It depends on Mg(2+) as a cofactor.

It localises to the cytoplasm. An essential GTPase which binds GTP, GDP and possibly (p)ppGpp with moderate affinity, with high nucleotide exchange rates and a fairly low GTP hydrolysis rate. Plays a role in control of the cell cycle, stress response, ribosome biogenesis and in those bacteria that undergo differentiation, in morphogenesis control. In Finegoldia magna (strain ATCC 29328 / DSM 20472 / WAL 2508) (Peptostreptococcus magnus), this protein is GTPase Obg.